Consider the following 273-residue polypeptide: MTKEMPVIYIISDALGETAEYVSRAAAAQFSGIRTKIRKVPYVQDEIHIDEILEEAAKEQAIIAYTLVVKKLRNYLEKKAQDYELRTVDILGPLIKMLADQTGLLPSYTPNVTHILDEQYFRKVDAIEFAVKYDDGKDPRGVLLADVVLIGVSRTSKTPLSMYLAHKGIKAANIPLVPEVSPPQELFRVPSQKVIGLTLKPDLLNQIRTERLRTLGLGSSADYANYERIVEELEYARGIMRKVGCPIIDATGKAIEETASRILEILYKGERNV.

151–158 (GVSRTSKT) contacts ADP.

This sequence belongs to the pyruvate, phosphate/water dikinase regulatory protein family. PDRP subfamily.

The catalysed reaction is N(tele)-phospho-L-histidyl/L-threonyl-[pyruvate, phosphate dikinase] + ADP = N(tele)-phospho-L-histidyl/O-phospho-L-threonyl-[pyruvate, phosphate dikinase] + AMP + H(+). The enzyme catalyses N(tele)-phospho-L-histidyl/O-phospho-L-threonyl-[pyruvate, phosphate dikinase] + phosphate + H(+) = N(tele)-phospho-L-histidyl/L-threonyl-[pyruvate, phosphate dikinase] + diphosphate. Bifunctional serine/threonine kinase and phosphorylase involved in the regulation of the pyruvate, phosphate dikinase (PPDK) by catalyzing its phosphorylation/dephosphorylation. The chain is Putative pyruvate, phosphate dikinase regulatory protein from Desulfitobacterium hafniense (strain Y51).